Consider the following 451-residue polypeptide: tRNA-2-methylthio-N(6)-dimethylallyladenosine synthase (451 aa).

One can recognise an MTTase N-terminal domain in the interval 3–120; the sequence is LKLHIKTYGC…LPEMINHVRI (118 aa). [4Fe-4S] cluster contacts are provided by Cys-12, Cys-49, Cys-83, Cys-157, Cys-161, and Cys-164. A Radical SAM core domain is found at 143–375; it reads QAKGPTAFVS…QECIRKQAMK (233 aa). The TRAM domain maps to 378–441; that stretch reads QAMKGTVQCI…SNSLRGELIS (64 aa).

This sequence belongs to the methylthiotransferase family. MiaB subfamily. In terms of assembly, monomer. The cofactor is [4Fe-4S] cluster.

The protein resides in the cytoplasm. The catalysed reaction is N(6)-dimethylallyladenosine(37) in tRNA + (sulfur carrier)-SH + AH2 + 2 S-adenosyl-L-methionine = 2-methylsulfanyl-N(6)-dimethylallyladenosine(37) in tRNA + (sulfur carrier)-H + 5'-deoxyadenosine + L-methionine + A + S-adenosyl-L-homocysteine + 2 H(+). Its function is as follows. Catalyzes the methylthiolation of N6-(dimethylallyl)adenosine (i(6)A), leading to the formation of 2-methylthio-N6-(dimethylallyl)adenosine (ms(2)i(6)A) at position 37 in tRNAs that read codons beginning with uridine. The protein is tRNA-2-methylthio-N(6)-dimethylallyladenosine synthase of Baumannia cicadellinicola subsp. Homalodisca coagulata.